The sequence spans 89 residues: Microcin N (89 aa).

Residues 1–15 (MRELDREELNCVGGA) form the signal peptide.

Belongs to the class IIa microcin family. Mass spectrometry suggests 3 of the 4 Met residues of the mature peptide are oxidized.

Its subcellular location is the secreted. Functionally, active against E.coli and Salmonella, but not Listeria or Campylobacter. Channel-forming microcin. Probably neutralized by its immunity protein McnI. In Escherichia coli, this protein is Microcin N.